A 431-amino-acid chain; its full sequence is 23S rRNA (uracil(1939)-C(5))-methyltransferase RlmD (431 aa).

One can recognise a TRAM domain in the interval Arg-10–Arg-68. Residues Cys-81, Cys-87, Cys-90, and Cys-161 each contribute to the [4Fe-4S] cluster site. S-adenosyl-L-methionine is bound by residues Gln-264, Phe-293, Asn-298, Glu-314, Asn-341, and Asp-362. Residue Cys-388 is the Nucleophile of the active site.

This sequence belongs to the class I-like SAM-binding methyltransferase superfamily. RNA M5U methyltransferase family. RlmD subfamily.

The enzyme catalyses uridine(1939) in 23S rRNA + S-adenosyl-L-methionine = 5-methyluridine(1939) in 23S rRNA + S-adenosyl-L-homocysteine + H(+). Catalyzes the formation of 5-methyl-uridine at position 1939 (m5U1939) in 23S rRNA. The sequence is that of 23S rRNA (uracil(1939)-C(5))-methyltransferase RlmD from Salmonella paratyphi A (strain ATCC 9150 / SARB42).